Reading from the N-terminus, the 133-residue chain is uncharacterized protein (133 aa).

The segment at 44–79 (VENQLASSKTEEQTLKISKKSNLNPAQKSSTFGLEN) is disordered. The segment covering 63–79 (KSNLNPAQKSSTFGLEN) has biased composition (polar residues).

Its subcellular location is the plastid. The protein resides in the chloroplast. This is an uncharacterized protein from Chlorella vulgaris (Green alga).